Consider the following 384-residue polypeptide: Calreticulin-3 (384 aa).

The signal sequence occupies residues 1–19 (MARALVQLWAICMLRVALA). The tract at residues 20–197 (TVYFQEEFLD…GQSIESGSIE (178 aa)) is N-domain. A glycan (N-linked (GlcNAc...) asparagine) is linked at N42. A disulfide bridge links C105 with C137. Residues Y109, K111, Y128, and D135 each coordinate an alpha-D-glucoside. Repeat copies occupy residues 191–202 (IESGSIEYDWNL), 208–219 (ETSPAESKDWEQ), 221–230 (KDNKAQDWEK), 234–245 (DASTSKQSDWNG), 249–259 (GDWPAPMLQKP), 263–271 (DGLKPEGIH), and 273–283 (DVWLHRKMKNT). A 4 X approximate repeats region spans residues 191–245 (IESGSIEYDWNLTSLKKETSPAESKDWEQTKDNKAQDWEKHFLDASTSKQSDWNG). The interval 198 to 294 (YDWNLTSLKK…YLTQYDLSEF (97 aa)) is P-domain. N201 is a glycosylation site (N-linked (GlcNAc...) asparagine). Positions 249 to 283 (GDWPAPMLQKPPYQDGLKPEGIHKDVWLHRKMKNT) are 3 X approximate repeats. The segment at 295-384 (ENIGAIGLEL…FNQFHRRNEL (90 aa)) is C-domain. E303 lines the an alpha-D-glucoside pocket. Residues 381–384 (RNEL) carry the Prevents secretion from ER motif.

This sequence belongs to the calreticulin family. In terms of assembly, component of an EIF2 complex at least composed of CELF1/CUGBP1, CALR, CALR3, EIF2S1, EIF2S2, HSP90B1 and HSPA5. As to expression, testis specific.

The protein localises to the endoplasmic reticulum lumen. During spermatogenesis, may act as a lectin-independent chaperone for specific client proteins such as ADAM3. Required for sperm fertility. CALR3 capacity for calcium-binding may be absent or much lower than that of CALR. This is Calreticulin-3 (CALR3) from Homo sapiens (Human).